A 373-amino-acid chain; its full sequence is Phosphoserine aminotransferase (373 aa).

Residue arginine 46 coordinates L-glutamate. The pyridoxal 5'-phosphate site is built by phenylalanine 104, threonine 150, aspartate 172, and glutamine 195. Lysine 196 bears the N6-(pyridoxal phosphate)lysine mark. A pyridoxal 5'-phosphate-binding site is contributed by 247–248; the sequence is NT.

It belongs to the class-V pyridoxal-phosphate-dependent aminotransferase family. SerC subfamily. Homodimer. The cofactor is pyridoxal 5'-phosphate.

It is found in the cytoplasm. It catalyses the reaction O-phospho-L-serine + 2-oxoglutarate = 3-phosphooxypyruvate + L-glutamate. The enzyme catalyses 4-(phosphooxy)-L-threonine + 2-oxoglutarate = (R)-3-hydroxy-2-oxo-4-phosphooxybutanoate + L-glutamate. It participates in amino-acid biosynthesis; L-serine biosynthesis; L-serine from 3-phospho-D-glycerate: step 2/3. It functions in the pathway cofactor biosynthesis; pyridoxine 5'-phosphate biosynthesis; pyridoxine 5'-phosphate from D-erythrose 4-phosphate: step 3/5. Catalyzes the reversible conversion of 3-phosphohydroxypyruvate to phosphoserine and of 3-hydroxy-2-oxo-4-phosphonooxybutanoate to phosphohydroxythreonine. The polypeptide is Phosphoserine aminotransferase (Rhodococcus jostii (strain RHA1)).